Reading from the N-terminus, the 139-residue chain is Peptide methionine sulfoxide reductase MsrB (139 aa).

The MsrB domain maps to 9–131 (TPSDNTEMTE…NSASLSFIDD (123 aa)). 4 residues coordinate Zn(2+): Cys-48, Cys-51, Cys-97, and Cys-100. Residue Cys-120 is the Nucleophile of the active site.

Belongs to the MsrB Met sulfoxide reductase family. Zn(2+) is required as a cofactor.

The catalysed reaction is L-methionyl-[protein] + [thioredoxin]-disulfide + H2O = L-methionyl-(R)-S-oxide-[protein] + [thioredoxin]-dithiol. The protein is Peptide methionine sulfoxide reductase MsrB of Pectobacterium atrosepticum (strain SCRI 1043 / ATCC BAA-672) (Erwinia carotovora subsp. atroseptica).